A 639-amino-acid polypeptide reads, in one-letter code: NADP-dependent malic enzyme, chloroplastic (639 aa).

The N-terminal 49 residues, 1–49 (MLSARAAATAAAAAASPLWKRGEGGSSGSGSGCTSCREVRRRAAAVRVR), are a transit peptide targeting the chloroplast. The segment at 15–34 (ASPLWKRGEGGSSGSGSGCT) is disordered. Tyr187 functions as the Proton donor in the catalytic mechanism. Arg240 provides a ligand contact to NAD(+). Lys258 acts as the Proton acceptor in catalysis. A divalent metal cation is bound by residues Glu330, Asp331, and Asp354. An NAD(+)-binding site is contributed by Asp354. 383-399 (LFLGAGEAGTGIAELIA) provides a ligand contact to NADP(+). Asn495 serves as a coordination point for NAD(+).

It belongs to the malic enzymes family. As to quaternary structure, homotetramer. The cofactor is Mg(2+). It depends on Mn(2+) as a cofactor.

The protein resides in the plastid. It is found in the chloroplast. The enzyme catalyses (S)-malate + NADP(+) = pyruvate + CO2 + NADPH. It carries out the reaction oxaloacetate + H(+) = pyruvate + CO2. It functions in the pathway photosynthesis; C4 acid pathway. Its function is as follows. The chloroplastic ME isoform decarboxylates malate shuttled from neighboring mesophyll cells. The CO(2) released is then refixed by ribulose-bisphosphate carboxylase. This pathway eliminates the photorespiratory loss of CO(2) that occurs in most plants. The protein is NADP-dependent malic enzyme, chloroplastic (ME6) of Oryza sativa subsp. japonica (Rice).